A 364-amino-acid chain; its full sequence is Developmentally-regulated GTP-binding protein 2 (364 aa).

Lysine 21 is subject to (3S)-3-hydroxylysine. The 226-residue stretch at 63–288 (ARVALIGFPS…LLEMLWEYLA (226 aa)) folds into the OBG-type G domain. GTP is bound by residues 69 to 76 (GFPSVGKS), 94 to 98 (FTTLT), 115 to 118 (DLPG), 246 to 249 (NKID), and 269 to 271 (SCG). 2 residues coordinate Mg(2+): serine 76 and threonine 96. In terms of domain architecture, TGS spans 288–363 (ALTCIYTKKR…EHEDVIQIVK (76 aa)).

Belongs to the TRAFAC class OBG-HflX-like GTPase superfamily. OBG GTPase family. Interacts with RWDD1; this interaction confers protection to polyubiquitination and proteolytic degradation. Interacts with JMJD7; this interaction is direct. It depends on Mg(2+) as a cofactor. Post-translationally, polyubiquitinated. In terms of processing, hydroxylated (with S stereochemistry) at C-3 of Lys-21 by JMJD7.

It is found in the nucleus. It localises to the cytoplasm. It catalyses the reaction GTP + H2O = GDP + phosphate + H(+). Functionally, catalyzes the conversion of GTP to GDP through hydrolysis of the gamma-phosphate bond in GTP. When hydroxylated at C-3 of 'Lys-21' by JMJD7, may bind to RNA and play a role in translation. This chain is Developmentally-regulated GTP-binding protein 2 (DRG2), found in Bos taurus (Bovine).